The chain runs to 632 residues: Probable potassium transport system protein Kup 1 (632 aa).

The next 12 helical transmembrane spans lie at 19 to 39, 59 to 79, 110 to 130, 146 to 166, 178 to 198, 213 to 233, 256 to 276, 298 to 318, 346 to 366, 373 to 393, 403 to 423, and 428 to 448; these read LVLG…LYAL, VISM…VVFV, VLMM…VITP, PQLS…LFLI, FGPI…LHLV, ITFL…VFLV, WFVL…AMLL, MVLL…SGAF, IYLP…VISF, AAAY…LAAV, PALV…FFAA, and VAEG…LLMT.

It belongs to the HAK/KUP transporter (TC 2.A.72) family.

The protein resides in the cell inner membrane. It carries out the reaction K(+)(in) + H(+)(in) = K(+)(out) + H(+)(out). Functionally, transport of potassium into the cell. Likely operates as a K(+):H(+) symporter. This is Probable potassium transport system protein Kup 1 from Cupriavidus necator (strain ATCC 17699 / DSM 428 / KCTC 22496 / NCIMB 10442 / H16 / Stanier 337) (Ralstonia eutropha).